The following is a 128-amino-acid chain: UPF0102 protein Mext_0406 (128 aa).

It belongs to the UPF0102 family.

This Methylorubrum extorquens (strain PA1) (Methylobacterium extorquens) protein is UPF0102 protein Mext_0406.